The chain runs to 200 residues: MDNMLQFMKLVGQLKRVPRTGWVYRNIKQPESVSDHMYRMSMMALTIQDISVNKERCMKLALVHDLAECIVGDIAPADNVSKAEKHRREKDAMVHITGLLDDGLRKEIYNLWEEYETQSSPEAKLVKELDNLEMIIQAHEYEELEGKPGRLQEFFVSTEGKFHHPEVLGLLKSLNEERARHIAAGGEKTTDTDSLTLAKP.

In terms of domain architecture, HD spans 33–135; it reads VSDHMYRMSM…VKELDNLEMI (103 aa). A divalent metal cation-binding residues include His36, His64, Asp65, Glu68, Asp73, Ile74, and Asp130.

The protein belongs to the HDDC2 family. Homodimer. Mn(2+) is required as a cofactor. The cofactor is Co(2+). It depends on Mg(2+) as a cofactor.

The enzyme catalyses a 2'-deoxyribonucleoside 5'-phosphate + H2O = a 2'-deoxyribonucleoside + phosphate. In terms of biological role, catalyzes the dephosphorylation of the nucleoside 5'-monophosphates deoxyadenosine monophosphate (dAMP), deoxycytidine monophosphate (dCMP), deoxyguanosine monophosphate (dGMP) and deoxythymidine monophosphate (dTMP). The chain is 5'-deoxynucleotidase HDDC2 (hddc2) from Danio rerio (Zebrafish).